Here is a 538-residue protein sequence, read N- to C-terminus: MAITYSSADELGNTTEGFLEIRENTSGGWKSARLIIVVQMAERFAYFGIASNLIMYLTGPLGESTAAAAANVNAWTGTVAFLPLLGGFLADSYLGRFRTIIISSSLYILGLGLLSFSTMIPSHQSKDSNQLQETIFFFSLYLVAIGQGGYNPCIKVFGADQFDGNDHKEARDKSSFFNWLMFGNCISILTTRLVSTYIQENLSWSLGFGIPSVSMLLSLFLFLLGTTSYRFSTERVGKKNPFARISRVFMEALKNRRQPDLDIANANANETLLLLAHQSSKQFRFLDRAAISCELAEIEEAKAVLRLIPIWITSVVYTIVHAQSPTFFTKQGATMDRSISPGLLVPAATLQSFINLSVVVFIPIYDRLLVPFARSFTQNSSGITTLQRIGTGIFLSILAMVLAALVETKRLQAARDELSIPMSVWWLIPQYVIFGVSDMFTMVGLQEFFYGQVPSELRSVGMALNLSIYGAGNYLSSFMISVIDKITNQYGQRSWFDNDLDQAHLDYFYWLLACLGFIGFAFYLWFAKSYVYSRSNTF.

Transmembrane regions (helical) follow at residues 44-64 (FAYF…LGES) and 74-94 (AWTG…DSYL). Thr99 bears the Phosphothreonine mark. The next 10 helical transmembrane spans lie at 100-120 (IIIS…STMI), 134-154 (TIFF…NPCI), 175-194 (SFFN…TRLV), 204-224 (WSLG…LFLL), 308-328 (IPIW…PTFF), 342-362 (GLLV…VVFI), 389-409 (IGTG…VETK), 424-444 (VWWL…TMVG), 463-483 (ALNL…ISVI), and 507-527 (YFYW…LWFA).

This sequence belongs to the major facilitator superfamily. Proton-dependent oligopeptide transporter (POT/PTR) (TC 2.A.17) family. Expressed in shoots and roots.

It localises to the membrane. The sequence is that of Protein NRT1/ PTR FAMILY 5.11 (NPF5.11) from Arabidopsis thaliana (Mouse-ear cress).